A 445-amino-acid chain; its full sequence is C4-dicarboxylate transport protein (445 aa).

8 helical membrane-spanning segments follow: residues 17–37, 56–76, 91–111, 157–177, 200–220, 233–253, 319–339, and 367–387; these read FYQI…LLGY, LVKM…IAAM, VYFL…SHIV, FVGG…LSLA, LVAI…AFTI, MLVG…LGMV, IYMT…LSLG, and AATL…ILGV.

This sequence belongs to the dicarboxylate/amino acid:cation symporter (DAACS) (TC 2.A.23) family.

It is found in the cell inner membrane. Functionally, responsible for the transport of dicarboxylates such as succinate, fumarate, and malate from the periplasm across the membrane. This is C4-dicarboxylate transport protein from Bordetella avium (strain 197N).